Here is a 392-residue protein sequence, read N- to C-terminus: ESX-1 secretion-associated protein EspA (392 aa).

Residues 302–392 (TRQALRPRAD…GQKVLVRNVV (91 aa)) form a disordered region. The segment covering 334-344 (QGMGGPVGMGG) has biased composition (gly residues).

In terms of assembly, homodimer; disulfide-linked. An artificial EsxB-EsxA heterodimer interacts with EspA.

It localises to the secreted. Required for secretion of EsxA (ESAT-6) and EsxB (CFP-10) and for virulence. Involved in translocation of bacteria from the host (human) phagolysosome to the host cytoplasm. The sequence is that of ESX-1 secretion-associated protein EspA from Mycobacterium tuberculosis (strain ATCC 25618 / H37Rv).